The primary structure comprises 467 residues: Probable endopeptidase p60 (467 aa).

An N-terminal signal peptide occupies residues 1–27 (MNMKKATIAATAGIAVTAFAAPTIASA). In terms of domain architecture, LysM 1 spans 28-71 (STVVVEAGDTLWGIAQSKGTTVDAIKKANNLTTDKIVPGQKLQV). The SH3b domain occupies 79 to 143 (KAEKSVSATW…VNGKYLTDKA (65 aa)). Disordered stretches follow at residues 154–199 (KKET…QNAT) and 247–348 (KTVA…GSTN). Over residues 172-185 (KQPTTQQTAPAPKA) the composition is skewed to low complexity. Residues 199–242 (TTHNVKSGDTIWALSVKYGVSVQDIMSWNNLSSSSIYVGQKLAI) form the LysM 2 domain. Residues 288–348 (TEQQTTTKAP…NTNTNQGSTN (61 aa)) show a composition bias toward low complexity. Positions 330–343 (TNTNTNTNTNTNTN) are 7 X 2 AA tandem repeats of T-N. The region spanning 349-467 (NASASALIAE…GKFLVGFGRV (119 aa)) is the NlpC/P60 domain. C379 serves as the catalytic Nucleophile. The active-site Proton acceptor is the H429. N441 is an active-site residue.

It belongs to the peptidase C40 family.

In terms of biological role, this major extracellular protein may be involved in the invasion of non-professional phagocytic cells by Listeria. In Listeria innocua serovar 6a (strain ATCC BAA-680 / CLIP 11262), this protein is Probable endopeptidase p60 (iap).